The chain runs to 881 residues: NACHT, LRR and PYD domains-containing protein 6 (881 aa).

In terms of domain architecture, Pyrin spans Met1–Val129. At Ser104 the chain carries Phosphoserine. Residues Ala154 to Asp175 are disordered. The NACHT domain maps to Leu194–Leu510. Gly200 to Thr207 contacts ATP. The stretch at Glu459–Gly484 is one LRR 1 repeat. Residues Gln579–Glu611 form a disordered region. Residues Lys596 to Glu611 show a composition bias toward acidic residues. LRR repeat units follow at residues Leu637 to Tyr660, Ala749 to Gln772, and Thr839 to Pro863.

This sequence belongs to the NLRP family. As to quaternary structure, homomultimer; forms the NLRP6 inflammasome polymeric complex, a filament composed of homopolymers in response to pathogens and other damage-associated signals. The core of NLRP6 inflammasomes consists of a signal sensor component (NLRP6), an adapter (PYCARD/ASC), which recruits effector pro-inflammatory caspases (CASP1 and CASP4). Interacts (via pyrin domain) with PYCARD/ASC (via pyrin domain); interaction takes place following NLRP6 activation and formation of liquid-liquid phase separation (LLPS), initiating nucleation which greatly enhances further addition of soluble PYCARD/ASC molecules to the speck in a prion-like polymerization process. Clustered PYCARD/ASC nucleates the formation of CASP1 (or possibly CASP4) filaments through the interaction of their respective CARD domains, acting as a platform for CASP1 polymerization. CASP1 filament formation increases local enzyme concentration, resulting in trans-autocleavage and activation. Active CASP1 then processes IL1B and IL18 precursors, leading to the release of mature cytokines in the extracellular milieu and inflammatory response. Interacts with DHX15. In terms of processing, polyubiquitinated with 'Lys-63'-linked chains, promoting the interaction with PYCARD/ASC and formation of the NLRP6 inflammasome. Deubiquitination by CYLD decreases the interaction with PYCARD/ASC. In terms of tissue distribution, detected in several tissues. Expressed in renal epithelial cells in medullary thick ascending limb of Henle, as well as in salivary gland apical epithelium (at protein level). Isoform 1 is widely expressed. Isoform 2 is primarily expressed in kidney (at protein level).

The protein resides in the cytoplasm. It is found in the inflammasome. It localises to the cell membrane. The protein localises to the nucleus membrane. In terms of biological role, acts as the sensor component of the NLRP6 inflammasome, which mediates inflammasome activation in response to various pathogen-associated signals, leading to maturation and secretion of IL1B and IL18. Inflammasomes are supramolecular complexes that assemble in the cytosol in response to pathogens and other damage-associated signals and play critical roles in innate immunity and inflammation. Acts as a recognition receptor (PRR): recognizes and binds specific pathogens and other damage-associated signals, such as lipoteichoic acid (LTA), a cell-wall component of Gram-positive bacteria, or double stranded RNA (dsRNA). May also recognize and bind lipopolysaccharide (LPS), a major component of the outer membrane of Gram-negative bacteria; however, LPS is probably not a major activator of the NLRP6 inflammasome. Following LTA- or dsRNA-binding, NLRP6 undergoes liquid-liquid phase separation (LLPS), enhancing multivalent interactions, an essential step for the formation of the NLRP6 inflammasome polymeric complex. The NLRP6 inflammasome acts by promoting recruitment of effector pro-inflammatory caspases (CASP1 and/or CASP4) that catalyze maturation and secretion of IL1B and IL18 in the extracellular milieu. The NLRP6 inflammasome plays a central role in the maintenance of epithelial integrity and host defense against microbial infections in the intestine. Required to restrict infection against Gram-positive bacteria by recognizing lipoteichoic acid (LTA), leading to recruitment of CASP4 and CASP1, and subsequent maturation and secretion of IL1B and IL18. Involved in intestinal antiviral innate immunity together with DHX15: recognizes and binds viral dsRNA to restrict infection by enteric viruses through the interferon pathway and GSDMD-dependent release of IL18. Required to prevent infection by the apicomplexan parasite Cryptosporidium in enterocytes by promoting GSDMD-dependent release of IL18. The NLRP6 inflammasome may also regulate the gut microbiota composition by acting as a sensor of microbiota-associated metabolites to form a PYCARD/ASC-dependent inflammasome for downstream IL18 release and secretion of antimicrobial peptides. Essential for gut mucosal self-renewal and proliferation. Regulate mucus secretion in an inflammasome- and autophagy-dependent manner to prevent invasion by enteric bacteria,. During systemic bacterial infections, the NLRP6 inflammasome negatively regulates neutrophil recruitment and neutrophil extracellular traps (NETs) formation. May promote peripheral nerve recovery following injury via an inflammasome-independent mechanism. This Rattus norvegicus (Rat) protein is NACHT, LRR and PYD domains-containing protein 6.